The following is a 62-amino-acid chain: Probable tautomerase RSc0807 (62 aa).

Proline 2 acts as the Proton acceptor; via imino nitrogen in catalysis.

Belongs to the 4-oxalocrotonate tautomerase family.

The sequence is that of Probable tautomerase RSc0807 from Ralstonia nicotianae (strain ATCC BAA-1114 / GMI1000) (Ralstonia solanacearum).